Here is a 974-residue protein sequence, read N- to C-terminus: Ephrin type-B receptor 3 (974 aa).

An N-terminal signal peptide occupies residues 1–16 (MLPAVFVILALSAVQG). The Extracellular segment spans residues 17–534 (LEETLMDTKW…RSSLQEQVPM (518 aa)). One can recognise an Eph LBD domain in the interval 18–196 (EETLMDTKWT…FFKKCPRTTA (179 aa)). A disulfide bridge links Cys60 with Cys178. 2 consecutive Fibronectin type-III domains span residues 318 to 426 (VPSA…TNQA) and 427 to 522 (APSS…IAED). N-linked (GlcNAc...) asparagine glycans are attached at residues Asn330 and Asn420. A helical transmembrane segment spans residues 535-555 (VVGSVTAGLIFIIAVVIIVIV). Residues 556 to 974 (CFSRKQRNDS…QMSQTLPVQV (419 aa)) are Cytoplasmic-facing. At Tyr590 the chain carries Phosphotyrosine; by autocatalysis. Positions 609–872 (VKIEEVIGAG…QIVSSLDKLI (264 aa)) constitute a Protein kinase domain. ATP contacts are provided by residues 615–623 (IGAGEFGEV) and Lys641. The active-site Proton acceptor is the Asp734. Positions 901–965 (TTFPTVSDWL…LNSVQDMRLQ (65 aa)) constitute an SAM domain. The PDZ-binding motif lies at 972-974 (VQV).

This sequence belongs to the protein kinase superfamily. Tyr protein kinase family. Ephrin receptor subfamily. In terms of assembly, heterotetramer upon binding of the ligand. The heterotetramer is composed of an ephrin dimer and a receptor dimer. Oligomerization is probably required to induce biological responses. In terms of processing, phosphorylated. Autophosphorylates upon ligand-binding. Autophosphorylation on Tyr-590 is required for interaction with SH2 domain-containing proteins. In terms of tissue distribution, expressed in the embryo in pre-somitic mesoderm, caudal somites, midbrain, and cement gland. Most abundant in adult brain, eye, heart, lung and ovary. Lower levels in intestine, kidney, oviduct and pharynx.

The protein resides in the cell membrane. It localises to the cell projection. The protein localises to the dendrite. The enzyme catalyses L-tyrosyl-[protein] + ATP = O-phospho-L-tyrosyl-[protein] + ADP + H(+). Functionally, receptor tyrosine kinase which binds promiscuously transmembrane ephrin-B family ligands residing on adjacent cells, leading to contact-dependent bidirectional signaling into neighboring cells. The signaling pathway downstream of the receptor is referred to as forward signaling while the signaling pathway downstream of the ephrin ligand is referred to as reverse signaling. Generally has an overlapping and redundant function with EPHB2. Like EPHB2, functions in axon guidance during development. In addition to its role in axon guidance also plays an important redundant role with other ephrin-B receptors in development and maturation of dendritic spines and the formation of excitatory synapses. May control other aspects of development through regulation of cell migration and positioning. In Xenopus laevis (African clawed frog), this protein is Ephrin type-B receptor 3 (ephb3).